The primary structure comprises 419 residues: GTPase Obg (419 aa).

Residues 1–156 (MRFVDYVSIE…FYLDLQLKVM (156 aa)) enclose the Obg domain. Residues 157-334 (ADIGLVGKPN…LGEKQKKLEI (178 aa)) enclose the OBG-type G domain. GTP is bound by residues 163-170 (GKPNAGKS), 188-192 (FTTLA), 209-212 (DLPG), 278-281 (NKCD), and 315-317 (NII). Mg(2+) is bound by residues serine 170 and threonine 190. The OCT domain maps to 342 to 419 (IEFNLKAPFL…RIYEFEFHWN (78 aa)).

The protein belongs to the TRAFAC class OBG-HflX-like GTPase superfamily. OBG GTPase family. As to quaternary structure, monomer. The cofactor is Mg(2+).

It is found in the cytoplasm. Its function is as follows. An essential GTPase which binds GTP, GDP and possibly (p)ppGpp with moderate affinity, with high nucleotide exchange rates and a fairly low GTP hydrolysis rate. Plays a role in control of the cell cycle, stress response, ribosome biogenesis and in those bacteria that undergo differentiation, in morphogenesis control. In Mesomycoplasma hyopneumoniae (strain J / ATCC 25934 / NCTC 10110) (Mycoplasma hyopneumoniae), this protein is GTPase Obg.